A 165-amino-acid polypeptide reads, in one-letter code: uncharacterized protein (165 aa).

A disordered region spans residues 28–97; sequence EASAPSGNPP…QLSQSLEVPT (70 aa). Positions 34 to 47 are enriched in pro residues; the sequence is GNPPPPPPPPPPPI. Composition is skewed to polar residues over residues 54-66 and 73-94; these read KSLN…QLDN and AQHT…QSLE.

This is an uncharacterized protein from Rickettsia prowazekii (strain Madrid E).